Consider the following 123-residue polypeptide: MVAIKSLAILALPVMAMASPLVPRTDSPSQCNNGSLQCCNSSMTQDRGNLQIAQGVLGGLLGGLLGLGGLLDLVDLNALIGVQCSPISIVGNANTCTQQTVCCSNNNFNGLIALGCTPININL.

The first 18 residues, 1 to 18, serve as a signal peptide directing secretion; sequence MVAIKSLAILALPVMAMA. 4 disulfide bridges follow: Cys31–Cys102, Cys38–Cys96, Cys39–Cys84, and Cys103–Cys116. N-linked (GlcNAc...) asparagine glycosylation is found at Asn33 and Asn40.

Belongs to the fungal hydrophobin family. In terms of assembly, self-assembles to form functional amyloid fibrils called rodlets. Self-assembly into fibrillar rodlets occurs spontaneously at hydrophobic:hydrophilic interfaces and the rodlets further associate laterally to form amphipathic monolayers.

The protein localises to the secreted. Its subcellular location is the cell wall. Aerial growth, conidiation, and dispersal of filamentous fungi in the environment rely upon a capability of their secreting small amphipathic proteins called hydrophobins (HPBs) with low sequence identity. Class I can self-assemble into an outermost layer of rodlet bundles on aerial cell surfaces, conferring cellular hydrophobicity that supports fungal growth, development and dispersal; whereas Class II form highly ordered films at water-air interfaces through intermolecular interactions but contribute nothing to the rodlet structure. The sequence is that of Class I hydrophobin pri2 from Cyclocybe aegerita (Black poplar mushroom).